The primary structure comprises 408 residues: 4-O-methyl-glucuronoyl methylesterase 1 (408 aa).

Residues 1–19 (MASSSRFAALLLLALPALA) form the signal peptide. Cystine bridges form between Cys31-Cys65, Cys218-Cys354, and Cys250-Cys326. The GXSYXG catalytic site motif motif lies at 217-222 (GCSRDG). Ser219 acts as the Nucleophile in catalysis. Substrate-binding residues include Lys223, Gln265, and Glu273. N-linked (GlcNAc...) asparagine glycosylation occurs at Asn287. Trp317 is a binding site for substrate. Asn350 is a glycosylation site (N-linked (GlcNAc...) asparagine). His353 functions as the Proton donor/acceptor in the catalytic mechanism. N-linked (GlcNAc...) asparagine glycosylation is found at Asn390, Asn395, and Asn401.

It belongs to the carbohydrate esterase 15 (CE15) family.

The protein resides in the secreted. It catalyses the reaction a 4-O-methyl-alpha-D-glucuronosyl ester derivative + H2O = 4-O-methyl-alpha-D-glucuronate derivative + an alcohol + H(+). In terms of biological role, glucuronoyl esterase which may play a significant role in biomass degradation, as it is considered to disconnect hemicellulose from lignin through the hydrolysis of the ester bond between 4-O-methyl-D-glucuronic acid residues of glucuronoxylans and aromatic alcohols of lignin. Can hydrolyze benzyl glucuronic acid (BnGlcA), allyl glucuronic acid (allylGlcA) and to a lower degree methyl glucuronic acid (MeGlcA) in vitro. This Wolfiporia cocos (strain MD-104) (Brown rot fungus) protein is 4-O-methyl-glucuronoyl methylesterase 1.